Reading from the N-terminus, the 80-residue chain is Acyl carrier protein (80 aa).

A Carrier domain is found at 2–77 (SEINQKVVDI…QVVEYLEKRL (76 aa)). Residue serine 37 is modified to O-(pantetheine 4'-phosphoryl)serine.

It belongs to the acyl carrier protein (ACP) family. Post-translationally, 4'-phosphopantetheine is transferred from CoA to a specific serine of apo-ACP by AcpS. This modification is essential for activity because fatty acids are bound in thioester linkage to the sulfhydryl of the prosthetic group.

It localises to the cytoplasm. It functions in the pathway lipid metabolism; fatty acid biosynthesis. Its function is as follows. Carrier of the growing fatty acid chain in fatty acid biosynthesis. The polypeptide is Acyl carrier protein (Amoebophilus asiaticus (strain 5a2)).